The chain runs to 354 residues: Dihydroorotate dehydrogenase (quinone) (354 aa).

Residues 70-74 and threonine 94 contribute to the FMN site; that span reads AGFDK. Residue lysine 74 coordinates substrate. Residue 119 to 123 coordinates substrate; it reads NAMGF. Positions 148 and 181 each coordinate FMN. Asparagine 181 contacts substrate. Serine 184 (nucleophile) is an active-site residue. Residue asparagine 186 coordinates substrate. The FMN site is built by lysine 217 and threonine 245. 246–247 lines the substrate pocket; that stretch reads NT. Residues glycine 265, glycine 294, and 315 to 316 contribute to the FMN site; that span reads YS.

The protein belongs to the dihydroorotate dehydrogenase family. Type 2 subfamily. As to quaternary structure, monomer. It depends on FMN as a cofactor.

The protein resides in the cell membrane. The catalysed reaction is (S)-dihydroorotate + a quinone = orotate + a quinol. It participates in pyrimidine metabolism; UMP biosynthesis via de novo pathway; orotate from (S)-dihydroorotate (quinone route): step 1/1. Its function is as follows. Catalyzes the conversion of dihydroorotate to orotate with quinone as electron acceptor. The sequence is that of Dihydroorotate dehydrogenase (quinone) from Sulfurovum sp. (strain NBC37-1).